Consider the following 170-residue polypeptide: uncharacterized protein (170 aa).

Positions 15–81 form a coiled coil; it reads EAFDEKAEKE…EREKSKSAVS (67 aa). Residues 20-77 show a composition bias toward basic and acidic residues; the sequence is KAEKEKVEKEKALKEKTEKEKAEKEKAEKEKVEKEKAEKEKAAKEKAAKEKAEREKSK. Positions 20-95 are disordered; it reads KAEKEKVEKE…NQNSNKGNVE (76 aa). The segment covering 78–92 has biased composition (polar residues); the sequence is SAVSPATTNQNSNKG. Residues 98-118 traverse the membrane as a helical segment; it reads VAIGVLAGGAVTGVAVGGAYL.

It localises to the membrane. This is an uncharacterized protein from Dictyostelium discoideum (Social amoeba).